We begin with the raw amino-acid sequence, 303 residues long: MLDTKKLTHLKQLEAESIHILREVVAEFDNPVMMYSVGKDSAVMLHLALKAFFPAKLPFPLLHVDTKWKFKEMIEFRDKRAKEEGFELLVHTNPEGIEKNINPFVHGSAVHTDIMKTEGLKQALNKYKFDAVFGGARRDEEKSRAKERIYSFRDKNHRWDPKNQRPELWNLYNSKVHKGESIRVFPLSNWTELDIWQYIYLEGIPIVPLYFAKRRPVIEKDGVKIMVDDERMPIEEHEVVKEEMVRFRTLGCYPLTGAVESSATTLPEIIQEMLLTKTSERQGRMIDNDSSGSMEKKKIEGYF.

Belongs to the PAPS reductase family. CysD subfamily. In terms of assembly, heterodimer composed of CysD, the smaller subunit, and CysN.

It catalyses the reaction sulfate + ATP + H(+) = adenosine 5'-phosphosulfate + diphosphate. It participates in sulfur metabolism; hydrogen sulfide biosynthesis; sulfite from sulfate: step 1/3. Its function is as follows. With CysN forms the ATP sulfurylase (ATPS) that catalyzes the adenylation of sulfate producing adenosine 5'-phosphosulfate (APS) and diphosphate, the first enzymatic step in sulfur assimilation pathway. APS synthesis involves the formation of a high-energy phosphoric-sulfuric acid anhydride bond driven by GTP hydrolysis by CysN coupled to ATP hydrolysis by CysD. The protein is Sulfate adenylyltransferase subunit 2 of Sulfurimonas denitrificans (strain ATCC 33889 / DSM 1251) (Thiomicrospira denitrificans (strain ATCC 33889 / DSM 1251)).